The primary structure comprises 417 residues: NADH-quinone oxidoreductase subunit D (417 aa).

This sequence belongs to the complex I 49 kDa subunit family. In terms of assembly, NDH-1 is composed of 14 different subunits. Subunits NuoB, C, D, E, F, and G constitute the peripheral sector of the complex.

It is found in the cell inner membrane. The catalysed reaction is a quinone + NADH + 5 H(+)(in) = a quinol + NAD(+) + 4 H(+)(out). NDH-1 shuttles electrons from NADH, via FMN and iron-sulfur (Fe-S) centers, to quinones in the respiratory chain. The immediate electron acceptor for the enzyme in this species is believed to be ubiquinone. Couples the redox reaction to proton translocation (for every two electrons transferred, four hydrogen ions are translocated across the cytoplasmic membrane), and thus conserves the redox energy in a proton gradient. This Herminiimonas arsenicoxydans protein is NADH-quinone oxidoreductase subunit D.